Here is a 768-residue protein sequence, read N- to C-terminus: Probable dipeptidyl peptidase 4 (768 aa).

An N-terminal signal peptide occupies residues 1–17; it reads MKLGKWSVLLLVGCTAA. Residues N38, N81, N104, N113, N221, N282, and N468 are each glycosylated (N-linked (GlcNAc...) asparagine). S616 serves as the catalytic Charge relay system. N668 carries N-linked (GlcNAc...) asparagine glycosylation. Catalysis depends on charge relay system residues D693 and H728.

It belongs to the peptidase S9B family.

The protein localises to the secreted. It carries out the reaction Release of an N-terminal dipeptide, Xaa-Yaa-|-Zaa-, from a polypeptide, preferentially when Yaa is Pro, provided Zaa is neither Pro nor hydroxyproline.. Its function is as follows. Extracellular dipeptidyl-peptidase which removes N-terminal dipeptides sequentially from polypeptides having unsubstituted N-termini provided that the penultimate residue is proline. In Aspergillus clavatus (strain ATCC 1007 / CBS 513.65 / DSM 816 / NCTC 3887 / NRRL 1 / QM 1276 / 107), this protein is Probable dipeptidyl peptidase 4 (dpp4).